The sequence spans 510 residues: Glycerol kinase (510 aa).

Thr-12 serves as a coordination point for ADP. ATP is bound by residues Thr-12, Thr-13, and Ser-14. Thr-12 is a sn-glycerol 3-phosphate binding site. Arg-16 is an ADP binding site. Arg-82, Glu-83, and Tyr-134 together coordinate sn-glycerol 3-phosphate. Positions 82, 83, and 134 each coordinate glycerol. Position 230 is a phosphohistidine; by HPr (His-230). Asp-244 provides a ligand contact to sn-glycerol 3-phosphate. Asp-244 and Gln-245 together coordinate glycerol. The ADP site is built by Thr-266 and Gly-309. Positions 266, 309, 313, and 410 each coordinate ATP. ADP is bound by residues Gly-410 and Asn-414.

Belongs to the FGGY kinase family. In terms of assembly, homotetramer and homodimer (in equilibrium). The phosphoenolpyruvate-dependent sugar phosphotransferase system (PTS), including enzyme I, and histidine-containing protein (HPr) are required for the phosphorylation, which leads to the activation of the enzyme.

It carries out the reaction glycerol + ATP = sn-glycerol 3-phosphate + ADP + H(+). The protein operates within polyol metabolism; glycerol degradation via glycerol kinase pathway; sn-glycerol 3-phosphate from glycerol: step 1/1. Its activity is regulated as follows. Activated by phosphorylation and inhibited by fructose 1,6-bisphosphate (FBP). Its function is as follows. Key enzyme in the regulation of glycerol uptake and metabolism. Catalyzes the phosphorylation of glycerol to yield sn-glycerol 3-phosphate. This is Glycerol kinase from Bacillus cereus (strain ATCC 10987 / NRS 248).